An 855-amino-acid chain; its full sequence is DNA mismatch repair protein MutS (855 aa).

ATP is bound at residue 616–623 (GPNMGGKS).

It belongs to the DNA mismatch repair MutS family.

Its function is as follows. This protein is involved in the repair of mismatches in DNA. It is possible that it carries out the mismatch recognition step. This protein has a weak ATPase activity. In Salmonella dublin (strain CT_02021853), this protein is DNA mismatch repair protein MutS.